Reading from the N-terminus, the 262-residue chain is tRNA pseudouridine synthase A (262 aa).

Asp56 (nucleophile) is an active-site residue. Tyr114 is a substrate binding site.

This sequence belongs to the tRNA pseudouridine synthase TruA family. As to quaternary structure, homodimer.

The catalysed reaction is uridine(38/39/40) in tRNA = pseudouridine(38/39/40) in tRNA. Functionally, formation of pseudouridine at positions 38, 39 and 40 in the anticodon stem and loop of transfer RNAs. This is tRNA pseudouridine synthase A from Lactiplantibacillus plantarum (strain ATCC BAA-793 / NCIMB 8826 / WCFS1) (Lactobacillus plantarum).